The primary structure comprises 381 residues: Adenylate cyclase (381 aa).

The disordered stretch occupies residues 1–30; sequence MTVDDTGSGADGDGRVDPEPAPDSADPGED. Residues 191-300 form the Guanylate cyclase domain; that stretch reads AVGFADLVGF…TTVNLASRLT (110 aa). Asp196 and Asp240 together coordinate Mg(2+).

It belongs to the adenylyl cyclase class-3 family. Mg(2+) serves as cofactor.

It catalyses the reaction ATP = 3',5'-cyclic AMP + diphosphate. The sequence is that of Adenylate cyclase (cya) from Streptomyces coelicolor (strain ATCC BAA-471 / A3(2) / M145).